We begin with the raw amino-acid sequence, 428 residues long: Trigger factor (428 aa).

The PPIase FKBP-type domain maps to Gly-163–Ser-248.

This sequence belongs to the FKBP-type PPIase family. Tig subfamily.

The protein resides in the cytoplasm. The enzyme catalyses [protein]-peptidylproline (omega=180) = [protein]-peptidylproline (omega=0). Functionally, involved in protein export. Acts as a chaperone by maintaining the newly synthesized protein in an open conformation. Functions as a peptidyl-prolyl cis-trans isomerase. The polypeptide is Trigger factor (Clostridioides difficile (strain 630) (Peptoclostridium difficile)).